A 684-amino-acid polypeptide reads, in one-letter code: MSKFPSEKPVLVTCGLPYANGKAHVGHLRTYVPADIFTRSLKKTGQEVTFVCGSDTHGTPIVFNAEELKTTPTEIIKVYHKHFDEIFKKMGVMLDAFGTTDDPTNHNRTTEIVSKLIENGYVYPKTIEIAYCPSCDRSLPDRYVKGTCPHCKKEARGDECDQGCGKHLEPGELEHPACTTCNGPAEYKQQEHFFFKLSQFKDFLLEYLEGLGGTLNARNYALGWVKQELTDWCITRSLDWGIKFPGHEDLVVYVWVDAPIGYIAFTEEWAEANNESWEKFWKDDGSIIHFIGGDIIYHHCIFWPAMLKGAGYNQPDAVVASGMVKIEDRTFSKSRGYVVWVDEDYLDHGFHQDLLRYYLASYTSHTKELNFSWKVFQDKVNTELVGVFGNFLYRTLLFTHKNFGEIPEGEVKQDILDEINTTIENAKEAMENYEFKKYADTVMALASYGNTYFQSNEPWKLIKENKEACGEIVKNCAQITKALCLLFEPILPEKMEEAWKQIGMETDVHETNYMEATELVKSGTTLEKPSILFEKIEDEKTEEMEAISAARVKEAIAKENGTEEVEEVKEIEEMKDLITFDDFSKLDIRIGTIVSAEAIKKSKKLLKLQVDLGEEETRQIVAGLKESHEPEQLIGKQVAVLTNLAPAKLCGVESNGMVLAGVDAADNAILLQPEKETNPGTCIH.

Residues 17-27 (PYANGKAHVGH) carry the 'HIGH' region motif. Residues Cys148, Cys151, Cys160, and Cys164 each coordinate Zn(2+). The short motif at 330-334 (TFSKS) is the 'KMSKS' region element. Position 333 (Lys333) interacts with ATP. The region spanning 582 to 684 (DFSKLDIRIG…KETNPGTCIH (103 aa)) is the tRNA-binding domain.

Belongs to the class-I aminoacyl-tRNA synthetase family. MetG type 1 subfamily. Homodimer. Zn(2+) serves as cofactor.

Its subcellular location is the cytoplasm. It carries out the reaction tRNA(Met) + L-methionine + ATP = L-methionyl-tRNA(Met) + AMP + diphosphate. Functionally, is required not only for elongation of protein synthesis but also for the initiation of all mRNA translation through initiator tRNA(fMet) aminoacylation. The protein is Methionine--tRNA ligase of Methanococcoides burtonii (strain DSM 6242 / NBRC 107633 / OCM 468 / ACE-M).